Here is a 131-residue protein sequence, read N- to C-terminus: Sulfurtransferase TusD (131 aa).

Catalysis depends on Cys-81, which acts as the Cysteine persulfide intermediate.

The protein belongs to the DsrE/TusD family. As to quaternary structure, heterohexamer, formed by a dimer of trimers. The hexameric TusBCD complex contains 2 copies each of TusB, TusC and TusD. The TusBCD complex interacts with TusE.

Its subcellular location is the cytoplasm. In terms of biological role, part of a sulfur-relay system required for 2-thiolation of 5-methylaminomethyl-2-thiouridine (mnm(5)s(2)U) at tRNA wobble positions. Accepts sulfur from TusA and transfers it in turn to TusE. This chain is Sulfurtransferase TusD, found in Photorhabdus laumondii subsp. laumondii (strain DSM 15139 / CIP 105565 / TT01) (Photorhabdus luminescens subsp. laumondii).